The primary structure comprises 301 residues: ATP synthase gamma chain (301 aa).

Belongs to the ATPase gamma chain family. As to quaternary structure, F-type ATPases have 2 components, CF(1) - the catalytic core - and CF(0) - the membrane proton channel. CF(1) has five subunits: alpha(3), beta(3), gamma(1), delta(1), epsilon(1). CF(0) has three main subunits: a, b and c.

Its subcellular location is the cell inner membrane. Functionally, produces ATP from ADP in the presence of a proton gradient across the membrane. The gamma chain is believed to be important in regulating ATPase activity and the flow of protons through the CF(0) complex. The protein is ATP synthase gamma chain of Helicobacter acinonychis (strain Sheeba).